The primary structure comprises 315 residues: Ribosomal RNA small subunit methyltransferase H (315 aa).

S-adenosyl-L-methionine is bound by residues 33–35, aspartate 52, phenylalanine 84, aspartate 106, and glutamine 113; that span reads GGH.

The protein belongs to the methyltransferase superfamily. RsmH family.

It is found in the cytoplasm. The catalysed reaction is cytidine(1402) in 16S rRNA + S-adenosyl-L-methionine = N(4)-methylcytidine(1402) in 16S rRNA + S-adenosyl-L-homocysteine + H(+). Functionally, specifically methylates the N4 position of cytidine in position 1402 (C1402) of 16S rRNA. The protein is Ribosomal RNA small subunit methyltransferase H of Lactobacillus acidophilus (strain ATCC 700396 / NCK56 / N2 / NCFM).